An 83-amino-acid polypeptide reads, in one-letter code: Disintegrin isoform D-2 (83 aa).

Residues 2 to 83 (PPVCGNELLE…GKSSDCPWNH (82 aa)) form the Disintegrin domain. Disulfide bonds link Cys-5–Cys-24, Cys-16–Cys-34, Cys-18–Cys-29, Cys-28–Cys-51, Cys-42–Cys-48, Cys-47–Cys-72, and Cys-60–Cys-79. The Cell attachment site signature appears at 64 to 66 (RGD).

This sequence belongs to the venom metalloproteinase (M12B) family. P-II subfamily. P-IIa sub-subfamily. In terms of assembly, monomer (disintegrin). Expressed by the venom gland.

The protein resides in the secreted. In terms of biological role, inhibits fibrinogen interaction with platelets. Acts by binding to the alpha-IIb/beta-3 (ITGA2B/ITGB3) on the platelet surface and inhibits aggregation induced by ADP, thrombin, platelet-activating factor and collagen. The sequence is that of Disintegrin isoform D-2 from Bitis arietans (African puff adder).